Reading from the N-terminus, the 487-residue chain is ATP synthase subunit beta (487 aa).

164–171 contributes to the ATP binding site; sequence GGAGVGKT.

This sequence belongs to the ATPase alpha/beta chains family. As to quaternary structure, F-type ATPases have 2 components, CF(1) - the catalytic core - and CF(0) - the membrane proton channel. CF(1) has five subunits: alpha(3), beta(3), gamma(1), delta(1), epsilon(1). CF(0) has four main subunits: a(1), b(1), b'(1) and c(9-12).

Its subcellular location is the cellular thylakoid membrane. It catalyses the reaction ATP + H2O + 4 H(+)(in) = ADP + phosphate + 5 H(+)(out). Produces ATP from ADP in the presence of a proton gradient across the membrane. The catalytic sites are hosted primarily by the beta subunits. This Synechococcus sp. (strain CC9605) protein is ATP synthase subunit beta.